Consider the following 1148-residue polypeptide: Transcription-repair-coupling factor (1148 aa).

A Helicase ATP-binding domain is found at 615–776; sequence DMCQPLAMDR…MSGMRDLSII (162 aa). Residue 628–635 coordinates ATP; that stretch reads GDVGFGKT. A DEEH box motif is present at residues 729 to 732; the sequence is DEEH. The Helicase C-terminal domain occupies 798–951; the sequence is VREAILREIL…GFALATHDLE (154 aa).

The protein in the N-terminal section; belongs to the UvrB family. It in the C-terminal section; belongs to the helicase family. RecG subfamily. Monomer. Interacts with UvrA and RNAP.

Its subcellular location is the cytoplasm. Functionally, couples transcription and DNA repair by recognizing RNA polymerase (RNAP) stalled at DNA lesions. Mediates ATP-dependent release of RNAP and its truncated transcript from the DNA, and recruitment of nucleotide excision repair machinery to the damaged site. Can also dissociate RNAP that is blocked by low concentration of nucleoside triphosphates or by physical obstruction, such as bound proteins. In addition, can rescue arrested complexes by promoting forward translocation. Has ATPase activity, which is required for removal of stalled RNAP, but seems to lack helicase activity. May act through a translocase activity that rewinds upstream DNA, leading either to translocation or to release of RNAP when the enzyme active site cannot continue elongation. The chain is Transcription-repair-coupling factor from Escherichia coli (strain K12).